A 428-amino-acid polypeptide reads, in one-letter code: Adenylosuccinate synthetase (428 aa).

Residues 12 to 18 (GDEGKGK) and 40 to 42 (GHT) each bind GTP. D13 acts as the Proton acceptor in catalysis. Mg(2+) contacts are provided by D13 and G40. Residues 13–16 (DEGK), 38–41 (NAGH), T130, R144, Q225, T240, and R304 contribute to the IMP site. H41 functions as the Proton donor in the catalytic mechanism. 300-306 (TTTGRPR) is a binding site for substrate. Residues R306, 332–334 (KLD), and 414–416 (SVG) each bind GTP.

Belongs to the adenylosuccinate synthetase family. Homodimer. The cofactor is Mg(2+).

It is found in the cytoplasm. It carries out the reaction IMP + L-aspartate + GTP = N(6)-(1,2-dicarboxyethyl)-AMP + GDP + phosphate + 2 H(+). The protein operates within purine metabolism; AMP biosynthesis via de novo pathway; AMP from IMP: step 1/2. Its function is as follows. Plays an important role in the de novo pathway of purine nucleotide biosynthesis. Catalyzes the first committed step in the biosynthesis of AMP from IMP. The polypeptide is Adenylosuccinate synthetase (Caldanaerobacter subterraneus subsp. tengcongensis (strain DSM 15242 / JCM 11007 / NBRC 100824 / MB4) (Thermoanaerobacter tengcongensis)).